A 299-amino-acid polypeptide reads, in one-letter code: Protoheme IX farnesyltransferase (299 aa).

8 helical membrane-spanning segments follow: residues Val-24 to Met-44, Trp-46 to Ile-66, Val-94 to Gly-114, Leu-118 to Leu-138, Ile-146 to Gly-166, Ala-172 to Val-192, Leu-232 to Val-252, and Ile-278 to Leu-298.

The protein belongs to the UbiA prenyltransferase family. Protoheme IX farnesyltransferase subfamily.

It localises to the cell inner membrane. The catalysed reaction is heme b + (2E,6E)-farnesyl diphosphate + H2O = Fe(II)-heme o + diphosphate. Its pathway is porphyrin-containing compound metabolism; heme O biosynthesis; heme O from protoheme: step 1/1. Converts heme B (protoheme IX) to heme O by substitution of the vinyl group on carbon 2 of heme B porphyrin ring with a hydroxyethyl farnesyl side group. The protein is Protoheme IX farnesyltransferase of Hahella chejuensis (strain KCTC 2396).